A 288-amino-acid polypeptide reads, in one-letter code: Polyamine aminopropyltransferase (288 aa).

Residues 9 to 242 (SGWLDEYHQG…GLWSWAFASM (234 aa)) enclose the PABS domain. Q36 is a binding site for S-methyl-5'-thioadenosine. H67 and D91 together coordinate spermidine. Residues E111 and 143 to 144 (NG) each bind S-methyl-5'-thioadenosine. The Proton acceptor role is filled by D162. Position 169 (P169) interacts with S-methyl-5'-thioadenosine.

The protein belongs to the spermidine/spermine synthase family. As to quaternary structure, homodimer or homotetramer.

Its subcellular location is the cytoplasm. The catalysed reaction is S-adenosyl 3-(methylsulfanyl)propylamine + putrescine = S-methyl-5'-thioadenosine + spermidine + H(+). It functions in the pathway amine and polyamine biosynthesis; spermidine biosynthesis; spermidine from putrescine: step 1/1. Catalyzes the irreversible transfer of a propylamine group from the amino donor S-adenosylmethioninamine (decarboxy-AdoMet) to putrescine (1,4-diaminobutane) to yield spermidine. This chain is Polyamine aminopropyltransferase, found in Prochlorococcus marinus (strain NATL1A).